Reading from the N-terminus, the 225-residue chain is Techylectin-like protein (225 aa).

One can recognise a Fibrinogen C-terminal domain in the interval 32–225; it reads CPSPPLPIDC…WTEIKIKDVK (194 aa). Cys41 and Cys60 are joined by a disulfide. The Cell attachment site signature appears at 75-77; sequence RGD. Residues Asp164 and Thr170 each contribute to the Ca(2+) site. Residues Cys172 and Cys185 are joined by a disulfide bond.

In terms of tissue distribution, expressed by the venom gland.

Its subcellular location is the secreted. Functionally, lectin involved in innate immunity. The chain is Techylectin-like protein from Phoneutria nigriventer (Brazilian armed spider).